The sequence spans 424 residues: MQAATSCDLKFRSTDPTSRNKCFSHAIPKRVAVTCGYRSESFSFPNGVSVSRSDWQSSCAILSSKVASVENTGGLADKIAAVNGHTNGSVNLGLVAVESTNGKLAPAQPLTITDLSPAPLHGSSLRVAYQGVPGAYSEAAAGKAYPNCDAIPCDQFDVAFQAVELWIADRAVLPVENSLGGSIHRNYDLLLRHRLHIVGEVQIPVHHCLLALPGVRTDCVSRVISHPQALAQTEHSLDVLTPHAAREAFHDTAAAAEYISANDLHDTAAVASARAAELYNLQILADGIQDDPGNVTRFLMLAREPIIPRTDRPFKTSIVFAAQEHKGTSVLFKVLSAFAFRDISLTKIESRPHHNRPLRVVGDGSFGTSKNFEYMFYVDFEASMAEPRAQNALAEVQEYTSFLRVLGSYPMDMTPWSMTSTEEA.

The N-terminal 34 residues, 1 to 34, are a transit peptide targeting the chloroplast; sequence MQAATSCDLKFRSTDPTSRNKCFSHAIPKRVAVT. The Prephenate dehydratase domain occupies 126–303; the sequence is RVAYQGVPGA…NVTRFLMLAR (178 aa). The ACT domain maps to 319–410; it reads VFAAQEHKGT…SFLRVLGSYP (92 aa).

Expressed in roots, leaves, stems, flowers and siliques. More abundant in stems and roots.

The protein resides in the plastid. Its subcellular location is the chloroplast stroma. The enzyme catalyses L-arogenate + H(+) = L-phenylalanine + CO2 + H2O. It participates in amino-acid biosynthesis; L-phenylalanine biosynthesis; L-phenylalanine from L-arogenate: step 1/1. Its function is as follows. Converts the prephenate produced from the shikimate-chorismate pathway into phenylalanine. The chain is Arogenate dehydratase 4, chloroplastic from Arabidopsis thaliana (Mouse-ear cress).